Consider the following 474-residue polypeptide: Aromatic amino acid aminotransferase C56E4.03 (474 aa).

This sequence belongs to the class-I pyridoxal-phosphate-dependent aminotransferase family. Pyridoxal 5'-phosphate is required as a cofactor.

It is found in the cytoplasm. The enzyme catalyses an aromatic L-alpha-amino acid + 2-oxoglutarate = an aromatic oxo-acid + L-glutamate. Has aromatic amino acid transaminase activity. The protein is Aromatic amino acid aminotransferase C56E4.03 of Schizosaccharomyces pombe (strain 972 / ATCC 24843) (Fission yeast).